We begin with the raw amino-acid sequence, 159 residues long: UPF0756 membrane protein PTH_1668 (159 aa).

4 helical membrane-spanning segments follow: residues Ile-15 to Ile-37, Leu-61 to Ile-81, Pro-117 to Thr-137, and Pro-138 to Phe-158.

The protein belongs to the UPF0756 family.

The protein localises to the cell membrane. The sequence is that of UPF0756 membrane protein PTH_1668 from Pelotomaculum thermopropionicum (strain DSM 13744 / JCM 10971 / SI).